A 387-amino-acid chain; its full sequence is MAFVHYTVKKIVHGLGAIKEAANEVKNLKGSKAFIVTDPGLAKIGVQKPLEEALTAGGIEWKLYAEAQLEPSMDSIQHCTDEAKAFGADVIIGFGGGSALDTTKAASVLLSNEGPIDKYFGINLVPNPSLPCILIPTTSGTGSEMTNISVLADTKNGGKKGVVSEYMYADTVILDAELTFGLPPRVTAMTGVDAFVHAMESFCGIAATPITDALNLQAMKLVGANIRQAYANGKNAAARDAMMYASALAGMGFGNTQNGIIHAIGTTLPVECHIPHGLAMSFCAPFSVGFNYIANPEKYAIVADILRGDDRSGCMSVMDRAADVEDAFRDLLNDLDIATGLSNYGVKREDLPACADRAFAAKRLLNNNPRAASRDQILALLEANFEA.

The protein belongs to the iron-containing alcohol dehydrogenase family.

The catalysed reaction is 2-hydroxyethane-1-sulfonate + NAD(+) = sulfoacetaldehyde + NADH + H(+). Its pathway is organosulfur degradation; alkanesulfonate degradation. In terms of biological role, involved in an anaerobic respiration pathway that converts the sulfonate taurine (2-aminoethanesulfonate) to ammonia, acetate and sulfide. Catalyzes the NADH-dependent reduction of sulfoacetaldehyde to 2-hydroxyethane-1-sulfonate (isethionate). Does not accept acetaldehyde as a substrate. The polypeptide is Sulfoacetaldehyde reductase (Bilophila wadsworthia (strain 3_1_6)).